Here is a 179-residue protein sequence, read N- to C-terminus: MSRIGNRELKIPVGLEVTIQPNNVIVKGVKGQLEQTIPSVITVVAKEGVVTTTRANDVKHSKQLHGTINSLIQGMLEGVSKGFKKELEINGVGYRAALVGDKLTLSLGYSHPVEYKIPQGITITLPKPTQIIVEGISKQLVGEVAANIRNYRKPEPYKGKGVKYKNEHIIRKEGKSAGK.

Belongs to the universal ribosomal protein uL6 family. Part of the 50S ribosomal subunit.

Its function is as follows. This protein binds to the 23S rRNA, and is important in its secondary structure. It is located near the subunit interface in the base of the L7/L12 stalk, and near the tRNA binding site of the peptidyltransferase center. This Spiroplasma citri protein is Large ribosomal subunit protein uL6.